The primary structure comprises 360 residues: GSSSPGVAPADNTGPRAAPSSPSQLCAVCGDTAACQHYGVRTCEGCKGFFKRTVQKGSKYVCLAEKSCPVDKRRRNRCQFCWFQKCLAVGMVKEVVRTDSLKGRRGRLPSKPKCPQESPPSPPISLITALVRAHVDTSPDFANLDYSQYREPSPLEPPMSDLEVIQQFYSLLTTSIDMIKLFAEKVPGYGDLCPEDREQLFASARLELFVLRLAYRTALEDTKLTFSNGSVLDKRQCQRSFGDWLHAVLDFSNTSYSMDIDISTFACLCALTLITDRHGLKEPHRVEQVQMKIIGCLRGHMPGGGGSSSGAAPLQRVLGALPELRSLSVKASQRIFYLKLEDLVPAPPLIENMFRASLPF.

The disordered stretch occupies residues 1–21 (GSSSPGVAPADNTGPRAAPSS). Positions 23 to 98 (SQLCAVCGDT…VGMVKEVVRT (76 aa)) form a DNA-binding region, nuclear receptor. 2 consecutive NR C4-type zinc fingers follow at residues 26–46 (CAVCGDTAACQHYGVRTCEGC) and 62–86 (CLAEKSCPVDKRRRNRCQFCWFQKC). An NR LBD domain is found at 122–357 (PPISLITALV…PLIENMFRAS (236 aa)).

Belongs to the nuclear hormone receptor family. NR4 subfamily. In terms of assembly, forms a heterodimer with USP.

The protein resides in the nucleus. The chain is Probable nuclear hormone receptor HR38 (HR38) from Bombyx mori (Silk moth).